The following is a 396-amino-acid chain: Elongation factor Tu (396 aa).

One can recognise a tr-type G domain in the interval 10–205 (KSHANIGTIG…AVDEYIPTPE (196 aa)). The segment at 19–26 (GHVDHGKT) is G1. 19 to 26 (GHVDHGKT) is a GTP binding site. Threonine 26 provides a ligand contact to Mg(2+). The tract at residues 61 to 65 (GITIS) is G2. The segment at 82-85 (DCPG) is G3. GTP contacts are provided by residues 82 to 86 (DCPGH) and 137 to 140 (NKCD). Positions 137 to 140 (NKCD) are G4. The tract at residues 175 to 177 (SAL) is G5.

Belongs to the TRAFAC class translation factor GTPase superfamily. Classic translation factor GTPase family. EF-Tu/EF-1A subfamily. Monomer.

The protein resides in the cytoplasm. The enzyme catalyses GTP + H2O = GDP + phosphate + H(+). Its function is as follows. GTP hydrolase that promotes the GTP-dependent binding of aminoacyl-tRNA to the A-site of ribosomes during protein biosynthesis. In Bacillus pumilus (strain SAFR-032), this protein is Elongation factor Tu.